The chain runs to 648 residues: 1-deoxy-D-xylulose-5-phosphate synthase (648 aa).

Thiamine diphosphate-binding positions include histidine 74 and 115-117 (GHA). Aspartate 146 is a Mg(2+) binding site. Thiamine diphosphate-binding positions include 147-148 (GA), asparagine 176, tyrosine 292, and glutamate 375. Residue asparagine 176 coordinates Mg(2+).

The protein belongs to the transketolase family. DXPS subfamily. Homodimer. It depends on Mg(2+) as a cofactor. Thiamine diphosphate serves as cofactor.

It catalyses the reaction D-glyceraldehyde 3-phosphate + pyruvate + H(+) = 1-deoxy-D-xylulose 5-phosphate + CO2. The protein operates within metabolic intermediate biosynthesis; 1-deoxy-D-xylulose 5-phosphate biosynthesis; 1-deoxy-D-xylulose 5-phosphate from D-glyceraldehyde 3-phosphate and pyruvate: step 1/1. Catalyzes the acyloin condensation reaction between C atoms 2 and 3 of pyruvate and glyceraldehyde 3-phosphate to yield 1-deoxy-D-xylulose-5-phosphate (DXP). This Synechococcus sp. (strain JA-2-3B'a(2-13)) (Cyanobacteria bacterium Yellowstone B-Prime) protein is 1-deoxy-D-xylulose-5-phosphate synthase.